Consider the following 88-residue polypeptide: UPF0297 protein GTNG_2488 (88 aa).

It belongs to the UPF0297 family.

The chain is UPF0297 protein GTNG_2488 from Geobacillus thermodenitrificans (strain NG80-2).